Here is a 374-residue protein sequence, read N- to C-terminus: Carboxypeptidase O (374 aa).

The signal sequence occupies residues 1–20 (MKPLLETLYLLGMLVPGGLG). Residues 49-344 (IYHPMGEIYE…EAVLSVLDDV (296 aa)) form the Peptidase M14 domain. Positions 108 and 111 each coordinate Zn(2+). N132, N174, and N187 each carry an N-linked (GlcNAc...) asparagine glycan. H236 provides a ligand contact to Zn(2+). N251 is a glycosylation site (N-linked (GlcNAc...) asparagine). The active-site Proton donor/acceptor is E310. D352 carries GPI-anchor amidated aspartate lipidation. The propeptide at 353-374 (SAGRVTSATMLLGLLVSCMSLL) is removed in mature form.

Belongs to the peptidase M14 family. The cofactor is Zn(2+). N-glycosylated. As to expression, detected in enterocytes of the ileum.

It is found in the apical cell membrane. Strongly inhibited by potato carboxypeptidase inhibitor, and the chelating agents EDTA and 1,10-phenanthroline. Also inhibited by compounds with multiple carboxylic acid groups such as citrate and succinate, and to a lesser exent the amino acids aspartate and glutamate. Not significantly inhibited by benzylsuccinic acid. In terms of biological role, carboxypeptidase which preferentially cleaves C-terminal acidic residues from peptides and proteins. Can also cleave C-terminal hydrophobic amino acids, with a preference for small residues over large residues. This Homo sapiens (Human) protein is Carboxypeptidase O.